A 599-amino-acid chain; its full sequence is Exocyst complex component EXO70B2 (599 aa).

The segment at 38–58 (GASGNRGGDPRPTPSRGGSNV) is disordered.

It belongs to the EXO70 family. In terms of assembly, self interacts. Interacts with EXO70B1. Interacts with the exocyst subunits EXO70H1, SEC5A and SEC15B. Binds to SNAP33. Subunit of the exocyst complex that mediates vesicle tethering during exocytosis. Binds to PUB22. Target of the E3 ubiquitin-protein ligase PUB22 that mediates its ubiquitination and degradation via the 26S proteasome to attenuate pathogen-associated molecular patterns (PAMP)-induced signaling, especially is response to the bacterial elicitor flg22. In terms of tissue distribution, mostly expressed in leaves and, to a lower extent, in roots, cotyledons, internodes, flower buds, siliques and anthers.

It localises to the cytoplasmic vesicle. It is found in the phagosome. The protein localises to the cytoplasm. The protein resides in the nucleus. In terms of biological role, component of an exocyst subcomplex specifically involved in autophagy-related, Golgi-independent membrane traffic to the vacuole. Regulates autophagosome formation and autophagy-related Golgi-independent import into the vacuole. Positive regulator of defense responses to pathogenic bacteria (e.g. P.syringae pv. maculicola), to the biotrophic oomycete H.arabidopsidis and to fungi (e.g. B.graminis hordei), especially in cell wall apposition formation related to plant defense. Required for both immediate and later responses triggered by pathogen-associated molecular patterns (PAMPs). Positive regulator of abscisic acid (ABA)-independent mannitol (drought)-promoted stomatal closure. The protein is Exocyst complex component EXO70B2 of Arabidopsis thaliana (Mouse-ear cress).